A 448-amino-acid polypeptide reads, in one-letter code: MREIVHIQAGQCGNQVGAAFWSTIADEHGLDSAGIYHGTSEAQHERLNVYFNEAAGGKYVPRAVLVDLEPGTMDAVKSGKFGNLFRPDNIIYGQSGAGNIWAKGHYTEGAELADAVLDVVRREAEACDALQGFQLTHSLGGGTGSGMGTLLLSKIREEYPDRMMATFSVAPAPKSSDTVVEPYNATLSMHQLVENSDETFCIDNEALSSIFANTLKIKSPSYDDLNHLVSAVMAGVTTSFRFPGELNSDLRKLAVNMVPFPRLHFFMVGFAPLAAIGSSSFQAVSVPELTQQMFDANNMMVAADPRHGRYLTVAALFRGKVSMKEVDEQIRSVQTKNSAYFVEWIPDNVLKAVCSVPPKDLKMSATFIGNSTSIQEIFRRLGDQFSAMFRRKAFLHWYTGEGMDEMEFTEAESNMNDLVSEYQQYQEAGIDEGDEDYEIEEEKEPLEY.

8 residues coordinate GTP: glutamine 11, glutamate 69, serine 138, glycine 142, threonine 143, glycine 144, asparagine 204, and asparagine 226. Glutamate 69 contributes to the Mg(2+) binding site. A disordered region spans residues 429 to 448; the sequence is GIDEGDEDYEIEEEKEPLEY.

The protein belongs to the tubulin family. In terms of assembly, dimer of alpha and beta chains. A typical microtubule is a hollow water-filled tube with an outer diameter of 25 nm and an inner diameter of 15 nM. Alpha-beta heterodimers associate head-to-tail to form protofilaments running lengthwise along the microtubule wall with the beta-tubulin subunit facing the microtubule plus end conferring a structural polarity. Microtubules usually have 13 protofilaments but different protofilament numbers can be found in some organisms and specialized cells. It depends on Mg(2+) as a cofactor.

It is found in the cytoplasm. The protein localises to the cytoskeleton. Functionally, tubulin is the major constituent of microtubules, a cylinder consisting of laterally associated linear protofilaments composed of alpha- and beta-tubulin heterodimers. Microtubules grow by the addition of GTP-tubulin dimers to the microtubule end, where a stabilizing cap forms. Below the cap, tubulin dimers are in GDP-bound state, owing to GTPase activity of alpha-tubulin. The sequence is that of Tubulin beta chain (nda3) from Schizosaccharomyces pombe (strain 972 / ATCC 24843) (Fission yeast).